A 218-amino-acid polypeptide reads, in one-letter code: Thiopurine S-methyltransferase (218 aa).

The S-adenosyl-L-methionine site is built by tryptophan 10, leucine 45, glutamate 66, and arginine 123.

The protein belongs to the class I-like SAM-binding methyltransferase superfamily. TPMT family.

It is found in the cytoplasm. It catalyses the reaction S-adenosyl-L-methionine + a thiopurine = S-adenosyl-L-homocysteine + a thiopurine S-methylether.. The chain is Thiopurine S-methyltransferase from Shewanella putrefaciens (strain CN-32 / ATCC BAA-453).